We begin with the raw amino-acid sequence, 415 residues long: Alpha-N-acetylgalactosaminidase (415 aa).

A signal peptide spans 1–17 (MLQKTVLLLALVAQVLM). Intrachain disulfides connect C38–C80, C42–C49, and C127–C158. Substrate is bound by residues 78–79 (DD) and K154. The Nucleophile role is filled by D156. N-linked (GlcNAc...) asparagine glycosylation is present at N177. C187 and C209 are disulfide-bonded. S188 is a substrate binding site. N201 is a glycosylation site (N-linked (GlcNAc...) asparagine). Residues R213 and D217 each contribute to the substrate site. The active-site Proton donor is D217. A Phosphoserine modification is found at S322. N330 carries an N-linked (GlcNAc...) asparagine glycan. The residue at position 332 (S332) is a Phosphoserine. N-linked (GlcNAc...) asparagine glycosylation is present at N385.

Belongs to the glycosyl hydrolase 27 family. Homodimer.

It is found in the lysosome. It catalyses the reaction Cleavage of non-reducing alpha-(1-&gt;3)-N-acetylgalactosamine residues from human blood group A and AB mucin glycoproteins, Forssman hapten and blood group A lacto series glycolipids.. It carries out the reaction a neolactoside IV(3)-alpha-GalNAc,IV(2)-alpha-Fuc-nLc4Cer(d18:1(4E)) + H2O = a neolactoside IV(2)-alpha-Fuc-nLc4Cer(d18:1(4E)) + N-acetyl-alpha-D-galactosamine. The enzyme catalyses a neolactoside IV(3)-alpha-GalNAc,IV(2)-alpha-Fuc-nLc4Cer(d18:0) + H2O = a neolactoside IV(2)-alpha-Fuc-nLc4Cer(d18:0) + N-acetyl-alpha-D-galactosamine. The catalysed reaction is a globoside IV3GalNAc-Gb4Cer + H2O = N-acetyl-alpha-D-galactosamine + a globoside Gb4Cer. Its function is as follows. Removes terminal alpha-N-acetylgalactosamine residues from glycolipids and glycopeptides. Required for the breakdown of glycolipids. The chain is Alpha-N-acetylgalactosaminidase (Naga) from Rattus norvegicus (Rat).